The following is a 234-amino-acid chain: Acetylxylan esterase 2 (234 aa).

The first 17 residues, 1 to 17 (MHSKFFAASLLGLGAAA), serve as a signal peptide directing secretion. A propeptide spanning residues 18-27 (IPLEGVMEKR) is cleaved from the precursor. Cystine bridges form between cysteine 29/cysteine 106 and cysteine 73/cysteine 79. Residue serine 117 is part of the active site. Intrachain disulfides connect cysteine 128/cysteine 188, cysteine 174/cysteine 206, and cysteine 198/cysteine 205. Aspartate 202 is an active-site residue. The N-linked (GlcNAc...) asparagine glycan is linked to asparagine 207. The active site involves histidine 214.

This sequence belongs to the cutinase family. Acetylxylan esterase subfamily. In terms of assembly, monomer.

The protein resides in the secreted. The enzyme catalyses Deacetylation of xylans and xylo-oligosaccharides.. The protein operates within glycan degradation; xylan degradation. In terms of biological role, degrades acetylated xylans by cleaving acetyl side groups from the hetero-xylan backbone. The protein is Acetylxylan esterase 2 (axe-2) of Talaromyces purpureogenus (Soft rot fungus).